The chain runs to 232 residues: Orotidine 5'-phosphate decarboxylase (232 aa).

Substrate-binding positions include D13, K35, 62–71, T122, R182, Q191, G211, and R212; that span reads DLKFHDIPNT. The active-site Proton donor is K64.

Belongs to the OMP decarboxylase family. Type 1 subfamily. Homodimer.

The catalysed reaction is orotidine 5'-phosphate + H(+) = UMP + CO2. Its pathway is pyrimidine metabolism; UMP biosynthesis via de novo pathway; UMP from orotate: step 2/2. Catalyzes the decarboxylation of orotidine 5'-monophosphate (OMP) to uridine 5'-monophosphate (UMP). This Pseudomonas paraeruginosa (strain DSM 24068 / PA7) (Pseudomonas aeruginosa (strain PA7)) protein is Orotidine 5'-phosphate decarboxylase.